A 287-amino-acid chain; its full sequence is Phospholipase A and acyltransferase 5 (287 aa).

Disordered regions lie at residues 48–72 and 86–138; these read PKQISRTASTESSDTQPTNDSASSQ and DRGL…SNQK. Polar residues-rich tracts occupy residues 49-72 and 128-138; these read KQISRTASTESSDTQPTNDSASSQ and LKNQAAESNQK. One can recognise an LRAT domain in the interval 144 to 257; the sequence is LIEIFRIGYE…LRYGVPRSQQ (114 aa). Active-site residues include His154 and His166. Catalysis depends on Cys241, which acts as the Acyl-thioester intermediate.

This sequence belongs to the H-rev107 family. As to expression, expressed in testis.

The protein localises to the cytoplasm. The protein resides in the cytosol. It catalyses the reaction a 1,2-diacyl-sn-glycero-3-phosphocholine + H2O = a 1-acyl-sn-glycero-3-phosphocholine + a fatty acid + H(+). The catalysed reaction is a 1,2-diacyl-sn-glycero-3-phosphocholine + H2O = a 2-acyl-sn-glycero-3-phosphocholine + a fatty acid + H(+). It carries out the reaction 1-hexadecanoyl-2-(5Z,8Z,11Z,14Z-eicosatetraenoyl)-sn-glycero-3-phosphocholine + 1,2-di-(9Z-octadecenoyl)-sn-glycero-3-phosphoethanolamine = N-(5Z,8Z,11Z,14Z-eicosatetraenoyl)-1,2-di-(9Z-octadecenoyl)-sn-glycero-3-phosphoethanolamine + 1-hexadecanoyl-sn-glycero-3-phosphocholine + H(+). The enzyme catalyses 1,2-di-(9Z-octadecenoyl)-sn-glycero-3-phosphoethanolamine + 1,2-dihexadecanoyl-sn-glycero-3-phosphocholine = N-hexadecanoyl-1,2-di-(9Z-octadecenoyl)-sn-glycero-3-phosphoethanolamine + 1-hexadecanoyl-sn-glycero-3-phosphocholine + H(+). It catalyses the reaction 1,2-di-(9Z-octadecenoyl)-sn-glycero-3-phosphoethanolamine + 1,2-dihexadecanoyl-sn-glycero-3-phosphocholine = N-hexadecanoyl-1,2-di-(9Z-octadecenoyl)-sn-glycero-3-phosphoethanolamine + 2-hexadecanoyl-sn-glycero-3-phosphocholine + H(+). The catalysed reaction is a 1,2-diacyl-sn-glycero-3-phosphoethanolamine + a 1,2-diacyl-sn-glycero-3-phosphocholine = an N-acyl-1,2-diacyl-sn-glycero-3-phosphoethanolamine + a 1-acyl-sn-glycero-3-phosphocholine + H(+). It carries out the reaction a 1,2-diacyl-sn-glycero-3-phosphoethanolamine + a 1,2-diacyl-sn-glycero-3-phosphocholine = an N-acyl-1,2-diacyl-sn-glycero-3-phosphoethanolamine + a 2-acyl-sn-glycero-3-phosphocholine + H(+). The enzyme catalyses 1-hexadecanoyl-2-(9Z-octadecenoyl)-sn-glycero-3-phosphocholine + 1,2-di-(9Z-octadecenoyl)-sn-glycero-3-phosphoethanolamine = N,1,2-tri-(9Z-octadecenoyl)-sn-glycero-3-phosphoethanolamine + 1-hexadecanoyl-sn-glycero-3-phosphocholine + H(+). Functionally, exhibits both phospholipase A1/2 and acyltransferase activities. Shows phospholipase A1 (PLA1) and A2 (PLA2) activity, catalyzing the calcium-independent release of fatty acids from the sn-1 or sn-2 position of glycerophospholipids. Shows N-acyltransferase activity, catalyzing the calcium-independent transfer of a fatty acyl group at the sn-1 position of phosphatidylcholine (PC) and other glycerophospholipids to the primary amine of phosphatidylethanolamine (PE), forming N-acylphosphatidylethanolamine (NAPE), which serves as precursor for N-acylethanolamines (NAEs). This is Phospholipase A and acyltransferase 5 from Rattus norvegicus (Rat).